The following is a 322-amino-acid chain: Deoxycytidylate deaminase (322 aa).

A CMP/dCMP-type deaminase domain is found at 173–311 (SWDSYFMEMA…SLLQAAGVQL (139 aa)). Histidine 246 serves as a coordination point for Zn(2+). Glutamate 248 serves as the catalytic Proton donor. Zn(2+) is bound by residues cysteine 273 and cysteine 276.

This sequence belongs to the cytidine and deoxycytidylate deaminase family. Zn(2+) is required as a cofactor.

The protein localises to the cytoplasm. Its subcellular location is the nucleus. It carries out the reaction dCMP + H2O + H(+) = dUMP + NH4(+). Functionally, supplies the nucleotide substrate for thymidylate synthetase. The protein is Deoxycytidylate deaminase of Schizosaccharomyces pombe (strain 972 / ATCC 24843) (Fission yeast).